A 462-amino-acid chain; its full sequence is Tubulin gamma-1 chain (462 aa).

Position 142–148 (A142–G148) interacts with GTP.

Belongs to the tubulin family.

It localises to the cytoplasm. The protein localises to the cytoskeleton. The protein resides in the microtubule organizing center. It is found in the centrosome. Functionally, tubulin is the major constituent of microtubules. The gamma chain is found at microtubule organizing centers (MTOC) such as the spindle poles or the centrosome, suggesting that it is involved in the minus-end nucleation of microtubule assembly. The sequence is that of Tubulin gamma-1 chain from Euplotes crassus.